Consider the following 510-residue polypeptide: NAD(P)H-quinone oxidoreductase subunit 2 B, chloroplastic (510 aa).

The next 13 helical transmembrane spans lie at 24–44 (LLLF…GLIL), 57–77 (IPWL…ALLF), 99–119 (IFQF…VEYI), 124–144 (MAIA…MFLC), 149–169 (LITI…LSGY), 183–203 (YLLM…WLYG), 227–247 (PGIS…LSPA), 295–315 (WHLL…LIAI), 323–343 (MLAY…IVGN), 354–374 (YMLF…LFGL), 395–415 (ALSL…AGFF), 418–438 (LHLF…IGLL), and 484–504 (MIVC…IIAI).

It belongs to the complex I subunit 2 family. In terms of assembly, NDH is composed of at least 16 different subunits, 5 of which are encoded in the nucleus.

The protein localises to the plastid. Its subcellular location is the chloroplast thylakoid membrane. It catalyses the reaction a plastoquinone + NADH + (n+1) H(+)(in) = a plastoquinol + NAD(+) + n H(+)(out). It carries out the reaction a plastoquinone + NADPH + (n+1) H(+)(in) = a plastoquinol + NADP(+) + n H(+)(out). Functionally, NDH shuttles electrons from NAD(P)H:plastoquinone, via FMN and iron-sulfur (Fe-S) centers, to quinones in the photosynthetic chain and possibly in a chloroplast respiratory chain. The immediate electron acceptor for the enzyme in this species is believed to be plastoquinone. Couples the redox reaction to proton translocation, and thus conserves the redox energy in a proton gradient. This Gossypium barbadense (Sea Island cotton) protein is NAD(P)H-quinone oxidoreductase subunit 2 B, chloroplastic.